Reading from the N-terminus, the 161-residue chain is Type-1 angiotensin II receptor-associated protein (161 aa).

Residues 1–26 (MELPAVNLKVILLVHWLLTTWGCLVF) are Extracellular-facing. The chain crosses the membrane as a helical span at residues 27 to 47 (SSSYAWGNFTILALGVWAVAQ). At 48–53 (RDSIDA) the chain is on the cytoplasmic side. A helical transmembrane segment spans residues 54 to 74 (IGMFLGGLVATIFLDIIYISI). Over 75–86 (FYSSVATGDTGR) the chain is Extracellular. The helical transmembrane segment at 87–107 (FGAGMAILSLLLKPFSCCLVY) threads the bilayer. Topologically, residues 108–161 (HMHRERGGELPLRPDFFGPSQEHSAYQTIDSSSDAAADPFASLENKGQAVPRGY) are cytoplasmic. The interval 110–122 (HRERGGELPLRPD) is interaction with AGTR1. S127 carries the phosphoserine modification. A Phosphothreonine modification is found at T135. S138 bears the Phosphoserine mark.

As to quaternary structure, interacts with RACK1, and with the C-terminal region of AGTR1. In terms of tissue distribution, ubiquitous but more abundant in kidney, testis and heart.

The protein localises to the endoplasmic reticulum membrane. It is found in the golgi apparatus membrane. It localises to the cytoplasmic vesicle membrane. Functionally, appears to be a negative regulator of type-1 angiotensin II receptor-mediated signaling by regulating receptor internalization as well as mechanism of receptor desensitization such as phosphorylation. Also induces a decrease in angiotensin II-stimulated transcriptional activity. May play a role of negative regulator in cardiomyocyte hypertrophy induced by angiotensin II through an inhibition of p38 mitogen-activated protein kinase pathway. This chain is Type-1 angiotensin II receptor-associated protein (Agtrap), found in Mus musculus (Mouse).